Here is a 417-residue protein sequence, read N- to C-terminus: UDP-N-acetylglucosamine 1-carboxyvinyltransferase (417 aa).

Phosphoenolpyruvate is bound at residue 22–23 (KN). Arg91 serves as a coordination point for UDP-N-acetyl-alpha-D-glucosamine. Cys115 (proton donor) is an active-site residue. A 2-(S-cysteinyl)pyruvic acid O-phosphothioketal modification is found at Cys115. UDP-N-acetyl-alpha-D-glucosamine-binding positions include 120 to 124 (RPVDQ), Asp304, and Ile326.

The protein belongs to the EPSP synthase family. MurA subfamily.

The protein localises to the cytoplasm. The enzyme catalyses phosphoenolpyruvate + UDP-N-acetyl-alpha-D-glucosamine = UDP-N-acetyl-3-O-(1-carboxyvinyl)-alpha-D-glucosamine + phosphate. It participates in cell wall biogenesis; peptidoglycan biosynthesis. Cell wall formation. Adds enolpyruvyl to UDP-N-acetylglucosamine. The protein is UDP-N-acetylglucosamine 1-carboxyvinyltransferase of Desulfovibrio desulfuricans (strain ATCC 27774 / DSM 6949 / MB).